The following is a 403-amino-acid chain: Argininosuccinate synthase (403 aa).

ATP is bound at residue Ala10–Ser18. Tyr89 contributes to the L-citrulline binding site. Gly119 is a binding site for ATP. Thr121, Asn125, and Asp126 together coordinate L-aspartate. Asn125 lines the L-citrulline pocket. L-citrulline contacts are provided by Arg129, Ser177, Ser186, Glu262, and Tyr274.

This sequence belongs to the argininosuccinate synthase family. Type 1 subfamily. In terms of assembly, homotetramer.

The protein resides in the cytoplasm. It catalyses the reaction L-citrulline + L-aspartate + ATP = 2-(N(omega)-L-arginino)succinate + AMP + diphosphate + H(+). The protein operates within amino-acid biosynthesis; L-arginine biosynthesis; L-arginine from L-ornithine and carbamoyl phosphate: step 2/3. This Synechococcus sp. (strain JA-3-3Ab) (Cyanobacteria bacterium Yellowstone A-Prime) protein is Argininosuccinate synthase.